The chain runs to 436 residues: Protein GOLM2 (436 aa).

Met-1 is subject to N-acetylmethionine. Over 1–14 (MVGFGANRRAGRLP) the chain is Cytoplasmic. The helical; Signal-anchor for type II membrane protein transmembrane segment at 15–35 (SLVLVVLLVVIVVLAFNYWSI) threads the bilayer. Positions 35–195 (ISSRHVLLQE…QFLQEQKQEA (161 aa)) form a coiled coil. Residues 36 to 436 (SSRHVLLQEE…YGKQHFNDVL (401 aa)) lie on the Lumenal side of the membrane. Basic and acidic residues-rich tracts occupy residues 193 to 207 (QEAHKIQSNDGKELD) and 224 to 247 (VADKNEEPSSNHIPHGKEQIKRGG). A disordered region spans residues 193 to 436 (QEAHKIQSND…YGKQHFNDVL (244 aa)). Residues Ser-233 and Ser-275 each carry the phosphoserine modification. 2 stretches are compositionally biased toward polar residues: residues 275–295 (SVSQHESHQTISHIPTGQPLS) and 305–321 (NHNGNPGTSKQNPSSPL). A phosphoserine mark is found at Ser-328 and Ser-332. The segment covering 344-362 (ATKDRVSDFHKLKQSRFFD) has biased composition (basic and acidic residues). At Ser-366 the chain carries Phosphoserine. Acidic residues predominate over residues 399-418 (YNEEEDGDGGEEDVQDDEER). Residues 426-436 (DYGKQHFNDVL) are compositionally biased toward basic and acidic residues.

It belongs to the GOLM family.

The protein resides in the membrane. This is Protein GOLM2 (GOLM2) from Pongo abelii (Sumatran orangutan).